The chain runs to 450 residues: Probable malate:quinone oxidoreductase (450 aa).

The protein belongs to the MQO family. Requires FAD as cofactor.

It catalyses the reaction (S)-malate + a quinone = a quinol + oxaloacetate. The protein operates within carbohydrate metabolism; tricarboxylic acid cycle; oxaloacetate from (S)-malate (quinone route): step 1/1. This is Probable malate:quinone oxidoreductase from Helicobacter acinonychis (strain Sheeba).